A 134-amino-acid chain; its full sequence is ATP synthase epsilon chain, chloroplastic (134 aa).

The protein belongs to the ATPase epsilon chain family. As to quaternary structure, F-type ATPases have 2 components, CF(1) - the catalytic core - and CF(0) - the membrane proton channel. CF(1) has five subunits: alpha(3), beta(3), gamma(1), delta(1), epsilon(1). CF(0) has three main subunits: a, b and c.

Its subcellular location is the plastid. The protein localises to the chloroplast thylakoid membrane. Produces ATP from ADP in the presence of a proton gradient across the membrane. The chain is ATP synthase epsilon chain, chloroplastic from Chlorella vulgaris (Green alga).